The chain runs to 576 residues: ATP-dependent RNA helicase has1 (576 aa).

Positions 1–94 (MGSAQDQTKK…STMGLSLPTD (94 aa)) are disordered. The span at 26–37 (RVVEADDQRELT) shows a compositional bias: basic and acidic residues. Positions 51–66 (PPTDETPDAEDVEQTE) are enriched in acidic residues. Residues 98 to 126 (QKFDELNLSEPTMKAIRQMGFETMTEIQQ) carry the Q motif motif. The Helicase ATP-binding domain occupies 129–305 (IPPTLAGRDI…RISLKPGPLY (177 aa)). Residue 142–149 (AKTGSGKT) participates in ATP binding. The DEAD box motif lies at 252 to 255 (DEAD). In terms of domain architecture, Helicase C-terminal spans 319-490 (GVDQGYIICE…DIQSQLEKLI (172 aa)). Positions 555–576 (DKVQARRPYGSQNKSARFKRRA) are disordered.

It belongs to the DEAD box helicase family. DDX18/HAS1 subfamily. In terms of assembly, associates in the nucleolus with the 60S and pre-60S ribosomal subunits.

The protein localises to the nucleus. The protein resides in the nucleolus. The enzyme catalyses ATP + H2O = ADP + phosphate + H(+). Functionally, ATP-dependent RNA helicase involved in 40S ribosomal subunit biogenesis. Required for the processing and cleavage of 35S pre-rRNA at sites A0, A1, and A2, leading to mature 18S rRNA. The polypeptide is ATP-dependent RNA helicase has1 (has1) (Aspergillus terreus (strain NIH 2624 / FGSC A1156)).